The following is a 496-amino-acid chain: Alanine aminotransferase 1 (496 aa).

An N-acetylalanine modification is found at Ala-2. Thr-22 bears the Phosphothreonine mark. An N6-(pyridoxal phosphate)lysine modification is found at Lys-314.

This sequence belongs to the class-I pyridoxal-phosphate-dependent aminotransferase family. Alanine aminotransferase subfamily. Homodimer. Pyridoxal 5'-phosphate is required as a cofactor. As to expression, liver, kidney, heart, and skeletal muscles. Expressed at moderate levels in the adipose tissue.

The protein resides in the cytoplasm. The enzyme catalyses L-alanine + 2-oxoglutarate = pyruvate + L-glutamate. It functions in the pathway amino-acid degradation; L-alanine degradation via transaminase pathway; pyruvate from L-alanine: step 1/1. Its function is as follows. Catalyzes the reversible transamination between alanine and 2-oxoglutarate to form pyruvate and glutamate. Participates in cellular nitrogen metabolism and also in liver gluconeogenesis starting with precursors transported from skeletal muscles. This is Alanine aminotransferase 1 (GPT) from Homo sapiens (Human).